We begin with the raw amino-acid sequence, 120 residues long: NAD(P)H-quinone oxidoreductase subunit 3, chloroplastic (120 aa).

A run of 3 helical transmembrane segments spans residues 9 to 29 (IFWAFLMISSVIPILAFLISG), 64 to 84 (MFALVFVVFDVETVFLYPWAM), and 88 to 108 (VLGVSVFIEALIFVLIPIVGS).

It belongs to the complex I subunit 3 family. NDH is composed of at least 16 different subunits, 5 of which are encoded in the nucleus.

It is found in the plastid. The protein localises to the chloroplast thylakoid membrane. It carries out the reaction a plastoquinone + NADH + (n+1) H(+)(in) = a plastoquinol + NAD(+) + n H(+)(out). It catalyses the reaction a plastoquinone + NADPH + (n+1) H(+)(in) = a plastoquinol + NADP(+) + n H(+)(out). Functionally, NDH shuttles electrons from NAD(P)H:plastoquinone, via FMN and iron-sulfur (Fe-S) centers, to quinones in the photosynthetic chain and possibly in a chloroplast respiratory chain. The immediate electron acceptor for the enzyme in this species is believed to be plastoquinone. Couples the redox reaction to proton translocation, and thus conserves the redox energy in a proton gradient. The sequence is that of NAD(P)H-quinone oxidoreductase subunit 3, chloroplastic from Amborella trichopoda.